Consider the following 1140-residue polypeptide: Squamosa promoter-binding-like protein 15 (1140 aa).

Disordered regions lie at residues 73–112 (RVNAGLSHHQQQQQQSPPAAAKAAEALRQGGGGSGGLNLQ) and 124–177 (DVSP…GGNS). 2 stretches are compositionally biased toward low complexity: residues 76–100 (AGLSHHQQQQQQSPPAAAKAAEALR) and 125–135 (VSPAATTVSSS). A compositionally biased stretch (gly residues) spans 164-177 (ASGGGGGGGGGGNS). An SBP-type zinc finger spans residues 184 to 261 (YPMCQVDDCR…AGHNRRRRKT (78 aa)). Residues cysteine 187, cysteine 192, cysteine 209, histidine 212, cysteine 228, cysteine 231, histidine 235, and cysteine 247 each coordinate Zn(2+). A Bipartite nuclear localization signal motif is present at residues 244 to 260 (KRSCRRRLAGHNRRRRK). 4 disordered regions span residues 327 to 382 (NNGN…ADGF), 403 to 472 (TSNP…TPPY), 496 to 517 (LSSESSNPLDERSPSSSPPVTH), and 558 to 597 (KDSERPIENGSPPNPAYQSCYTSTSCSDHSPSTSNSDGQD). The span at 345–375 (ASHSQQQDSVQRTTNGFEKQTNGLDKQTNGF) shows a compositional bias: polar residues. Over residues 403 to 430 (TSNPDSNTSQSQGSSDSSGNNKSKSQST) the composition is skewed to low complexity. A compositionally biased stretch (basic and acidic residues) spans 450–466 (RKNDALERSPEMYKQPD). The span at 496–514 (LSSESSNPLDERSPSSSPP) shows a compositional bias: polar residues. Residues 579 to 593 (TSTSCSDHSPSTSNS) show a composition bias toward low complexity.

As to expression, expressed in stems, leaf sheaths, and young panicles.

It is found in the nucleus. Functionally, trans-acting factor that binds specifically to the consensus nucleotide sequence 5'-TNCGTACAA-3'. The sequence is that of Squamosa promoter-binding-like protein 15 (SPL15) from Oryza sativa subsp. indica (Rice).